The following is a 196-amino-acid chain: MSRYRGPRLKKIRRLGALPGLTRKTPKSGSNLKKKFNSGKKEQYRIRLQEKQKLRFHYGLTERQLLRYVHIAGKAKRSTGQVLLQLLEMRLDNILFRLGMASTIPGARQLVNHRHILVNGRIVNIPSFRCKPRDIITTKDNQRSKGLVQNYIASSDPGKLPKHLTIDTLEYKGLVNKILDRKWVGLKINELLVVEY.

The S4 RNA-binding domain maps to 89–157 (MRLDNILFRL…VQNYIASSDP (69 aa)).

This sequence belongs to the universal ribosomal protein uS4 family. In terms of assembly, part of the 30S ribosomal subunit. Contacts protein S5. The interaction surface between S4 and S5 is involved in control of translational fidelity.

It is found in the plastid. The protein resides in the chloroplast. Its function is as follows. One of the primary rRNA binding proteins, it binds directly to 16S rRNA where it nucleates assembly of the body of the 30S subunit. In terms of biological role, with S5 and S12 plays an important role in translational accuracy. This is Small ribosomal subunit protein uS4c (rps4) from Elymus canadensis (Canada wild rye).